Reading from the N-terminus, the 169-residue chain is Putative 3-methyladenine DNA glycosylase (169 aa).

It belongs to the DNA glycosylase MPG family.

The polypeptide is Putative 3-methyladenine DNA glycosylase (Wolbachia sp. subsp. Brugia malayi (strain TRS)).